A 279-amino-acid polypeptide reads, in one-letter code: 3-methyl-2-oxobutanoate hydroxymethyltransferase (279 aa).

Mg(2+) is bound by residues D43 and D82. 3-methyl-2-oxobutanoate-binding positions include 43 to 44 (DS), D82, and K112. E114 serves as a coordination point for Mg(2+). Catalysis depends on E181, which acts as the Proton acceptor.

Belongs to the PanB family. In terms of assembly, homodecamer; pentamer of dimers. Mg(2+) serves as cofactor.

The protein localises to the cytoplasm. It carries out the reaction 3-methyl-2-oxobutanoate + (6R)-5,10-methylene-5,6,7,8-tetrahydrofolate + H2O = 2-dehydropantoate + (6S)-5,6,7,8-tetrahydrofolate. It functions in the pathway cofactor biosynthesis; (R)-pantothenate biosynthesis; (R)-pantoate from 3-methyl-2-oxobutanoate: step 1/2. Functionally, catalyzes the reversible reaction in which hydroxymethyl group from 5,10-methylenetetrahydrofolate is transferred onto alpha-ketoisovalerate to form ketopantoate. This Halalkalibacterium halodurans (strain ATCC BAA-125 / DSM 18197 / FERM 7344 / JCM 9153 / C-125) (Bacillus halodurans) protein is 3-methyl-2-oxobutanoate hydroxymethyltransferase.